The primary structure comprises 183 residues: Peptide deformylase (183 aa).

Residues Cys90 and His132 each contribute to the Fe cation site. Glu133 is an active-site residue. His136 contacts Fe cation.

It belongs to the polypeptide deformylase family. Requires Fe(2+) as cofactor.

The catalysed reaction is N-terminal N-formyl-L-methionyl-[peptide] + H2O = N-terminal L-methionyl-[peptide] + formate. Removes the formyl group from the N-terminal Met of newly synthesized proteins. Requires at least a dipeptide for an efficient rate of reaction. N-terminal L-methionine is a prerequisite for activity but the enzyme has broad specificity at other positions. This chain is Peptide deformylase, found in Parafrankia sp. (strain EAN1pec).